Consider the following 163-residue polypeptide: Transcriptional repressor NrdR (163 aa).

A zinc finger spans residues 3 to 34 (CVQCGHLEDKVIDSRMSKDGTTIRRRRVCLRC). An ATP-cone domain is found at 49–139 (LRVVKRDNLR…VYRQFSNVEE (91 aa)).

It belongs to the NrdR family. Requires Zn(2+) as cofactor.

Functionally, negatively regulates transcription of bacterial ribonucleotide reductase nrd genes and operons by binding to NrdR-boxes. In Akkermansia muciniphila (strain ATCC BAA-835 / DSM 22959 / JCM 33894 / BCRC 81048 / CCUG 64013 / CIP 107961 / Muc), this protein is Transcriptional repressor NrdR.